A 751-amino-acid chain; its full sequence is ABC transporter G family member 22 (751 aa).

The tract at residues 26–81 is disordered; the sequence is ADIRSPHGSMDANGVPATAPAAVGGGGTLSRKSSRRLMGMSPGRSSGAGTHIRKSR. In terms of domain architecture, ABC transporter spans 157–403; that stretch reads LKFRDVTYKV…FSSIGCSPLI (247 aa). An ATP-binding site is contributed by 197 to 204; it reads GPSGSGKT. Positions 498 to 707 constitute an ABC transmembrane type-2 domain; that stretch reads EQYCILFCRG…TYKLLLKVQY (210 aa). A run of 6 helical transmembrane segments spans residues 516-536, 552-572, 602-622, 634-654, 666-686, and 722-742; these read FSWLRVTQVLSTAVILGLLWW, LLFFIAVFWGFFPVFTAIFAF, LPLDFILPSLFLLVVYFMTGL, LTVFLCIIAAQGLGLAIGAIL, VTVMTFMLAGGFFVKKVPVFI, and GLTEVAALVVMIFGYRLLAYL.

The protein belongs to the ABC transporter superfamily. ABCG family. Eye pigment precursor importer (TC 3.A.1.204) subfamily.

It localises to the membrane. This is ABC transporter G family member 22 (ABCG22) from Arabidopsis thaliana (Mouse-ear cress).